A 398-amino-acid chain; its full sequence is Acetate kinase (398 aa).

Asn7 lines the Mg(2+) pocket. Lys14 contacts ATP. Arg85 serves as a coordination point for substrate. Residue Asp142 is the Proton donor/acceptor of the active site. ATP-binding positions include His202 to Gly206, Asp277 to Arg279, and Gly325 to Asn329. Glu379 serves as a coordination point for Mg(2+).

This sequence belongs to the acetokinase family. In terms of assembly, homodimer. Mg(2+) is required as a cofactor. Requires Mn(2+) as cofactor.

The protein localises to the cytoplasm. It carries out the reaction acetate + ATP = acetyl phosphate + ADP. It participates in metabolic intermediate biosynthesis; acetyl-CoA biosynthesis; acetyl-CoA from acetate: step 1/2. Catalyzes the formation of acetyl phosphate from acetate and ATP. Can also catalyze the reverse reaction. The polypeptide is Acetate kinase (Deinococcus radiodurans (strain ATCC 13939 / DSM 20539 / JCM 16871 / CCUG 27074 / LMG 4051 / NBRC 15346 / NCIMB 9279 / VKM B-1422 / R1)).